Here is a 434-residue protein sequence, read N- to C-terminus: D-amino acid dehydrogenase (434 aa).

Residue 3 to 17 (VLVLGSGVIGTASAY) participates in FAD binding.

The protein belongs to the DadA oxidoreductase family. FAD serves as cofactor.

The catalysed reaction is a D-alpha-amino acid + A + H2O = a 2-oxocarboxylate + AH2 + NH4(+). The protein operates within amino-acid degradation; D-alanine degradation; NH(3) and pyruvate from D-alanine: step 1/1. Functionally, oxidative deamination of D-amino acids. The sequence is that of D-amino acid dehydrogenase from Pseudomonas putida (strain GB-1).